The following is a 222-amino-acid chain: Holliday junction branch migration complex subunit RuvA (222 aa).

The interval 1 to 67 (MISWLNGLKI…EDGSQLIGFL (67 aa)) is domain I. The domain II stretch occupies residues 68–146 (NKLERDLFRK…DLIGSSLKKT (79 aa)). A flexible linker region spans residues 147 to 155 (NNHLELEYE). Positions 155–222 (ETNVADEVRS…TLIRINTESG (68 aa)) are domain III.

Belongs to the RuvA family. As to quaternary structure, homotetramer. Forms an RuvA(8)-RuvB(12)-Holliday junction (HJ) complex. HJ DNA is sandwiched between 2 RuvA tetramers; dsDNA enters through RuvA and exits via RuvB. An RuvB hexamer assembles on each DNA strand where it exits the tetramer. Each RuvB hexamer is contacted by two RuvA subunits (via domain III) on 2 adjacent RuvB subunits; this complex drives branch migration. In the full resolvosome a probable DNA-RuvA(4)-RuvB(12)-RuvC(2) complex forms which resolves the HJ.

The protein resides in the cytoplasm. Functionally, the RuvA-RuvB-RuvC complex processes Holliday junction (HJ) DNA during genetic recombination and DNA repair, while the RuvA-RuvB complex plays an important role in the rescue of blocked DNA replication forks via replication fork reversal (RFR). RuvA specifically binds to HJ cruciform DNA, conferring on it an open structure. The RuvB hexamer acts as an ATP-dependent pump, pulling dsDNA into and through the RuvAB complex. HJ branch migration allows RuvC to scan DNA until it finds its consensus sequence, where it cleaves and resolves the cruciform DNA. The protein is Holliday junction branch migration complex subunit RuvA of Prochlorococcus marinus (strain SARG / CCMP1375 / SS120).